The chain runs to 425 residues: MANTEAFFSQTLAERDPELFATITEEQERQETGIELIASENITSKAVLEAQGSVLTNKYAEGYPHRRYYGGCEAVDVTEQLAIDRAKKLFNCEFVNVQPHSGAQANGAVMLALLQPGDTIMGMSLSSGGHLTHGAAPAQSGKWFNAVQYEVSPETLLIDYDAIEAQALECKPKMIIAGGSAIPRQIDFKRFREIADKVGAYLFVDMAHIAGLVATGVHPSPLPHAHVVTTTTHKTLRGPRGGMILSNDLDLGKKINSAVFPGYQGGPLMHVIAGKAVAFGEALKPEFTDYIKQVVANAKALAEVMVERGCDIVTGGTDTHLMLVDLRPKGLKGNAADAALERAGITCNKNGIPFDTEKPMVTSGIRLGTPAATSRGFGIEEFQKVGHLISDVLDGLVEMPEGNPEVEARVLAEVRELCKRFPLYR.

(6S)-5,6,7,8-tetrahydrofolate is bound by residues Leu125 and 129–131 (GHL). Lys234 carries the post-translational modification N6-(pyridoxal phosphate)lysine.

Belongs to the SHMT family. As to quaternary structure, homodimer. It depends on pyridoxal 5'-phosphate as a cofactor.

It localises to the cytoplasm. It catalyses the reaction (6R)-5,10-methylene-5,6,7,8-tetrahydrofolate + glycine + H2O = (6S)-5,6,7,8-tetrahydrofolate + L-serine. The protein operates within one-carbon metabolism; tetrahydrofolate interconversion. It participates in amino-acid biosynthesis; glycine biosynthesis; glycine from L-serine: step 1/1. In terms of biological role, catalyzes the reversible interconversion of serine and glycine with tetrahydrofolate (THF) serving as the one-carbon carrier. This reaction serves as the major source of one-carbon groups required for the biosynthesis of purines, thymidylate, methionine, and other important biomolecules. Also exhibits THF-independent aldolase activity toward beta-hydroxyamino acids, producing glycine and aldehydes, via a retro-aldol mechanism. This Marinomonas sp. (strain MWYL1) protein is Serine hydroxymethyltransferase.